The chain runs to 406 residues: Nicotinate phosphoribosyltransferase (406 aa).

H227 is modified (phosphohistidine; by autocatalysis).

This sequence belongs to the NAPRTase family. Post-translationally, transiently phosphorylated on a His residue during the reaction cycle. Phosphorylation strongly increases the affinity for substrates and increases the rate of nicotinate D-ribonucleotide production. Dephosphorylation regenerates the low-affinity form of the enzyme, leading to product release.

The enzyme catalyses nicotinate + 5-phospho-alpha-D-ribose 1-diphosphate + ATP + H2O = nicotinate beta-D-ribonucleotide + ADP + phosphate + diphosphate. It participates in cofactor biosynthesis; NAD(+) biosynthesis; nicotinate D-ribonucleotide from nicotinate: step 1/1. Functionally, catalyzes the synthesis of beta-nicotinate D-ribonucleotide from nicotinate and 5-phospho-D-ribose 1-phosphate at the expense of ATP. The chain is Nicotinate phosphoribosyltransferase from Methanosarcina mazei (strain ATCC BAA-159 / DSM 3647 / Goe1 / Go1 / JCM 11833 / OCM 88) (Methanosarcina frisia).